A 107-amino-acid polypeptide reads, in one-letter code: Sperm protamine P1 (107 aa).

Composition is skewed to basic and acidic residues over residues 1-10 and 20-33; these read ALRKVDRNRF and REAK…EFPG. Positions 1–35 are cleaved as a propeptide — removed in mature form; it reads ALRKVDRNRFVLDNVTPQPREAKRYKEEEEFPGHG. The interval 1 to 107 is disordered; it reads ALRKVDRNRF…RRRRRGKKGK (107 aa). Residues 34–107 show a composition bias toward basic residues; that stretch reads HGRRRRRRSK…RRRRRGKKGK (74 aa). Ser-42 carries the phosphoserine modification.

Post-translationally, a series of N-terminal cleavages yield the mature protein. Only the mature protein is phosphorylated. Gonads.

It is found in the nucleus. Its subcellular location is the chromosome. In terms of biological role, protamines substitute for histones in the chromatin of sperm during the haploid phase of spermatogenesis. They compact sperm DNA into a highly condensed, stable and inactive complex. This chain is Sperm protamine P1, found in Bolinus brandaris (Purple dye murex).